A 203-amino-acid polypeptide reads, in one-letter code: Sarcosine oxidase subunit gamma (203 aa).

The protein belongs to the SoxG family. Heterotetramer composed of subunits alpha (SoxA), beta (SoxB), gamma (SoxG) and delta (SoxD).

The protein localises to the cytoplasm. It catalyses the reaction sarcosine + (6S)-5,6,7,8-tetrahydrofolate + O2 = (6R)-5,10-methylene-5,6,7,8-tetrahydrofolate + glycine + H2O2. It carries out the reaction sarcosine + O2 + H2O = formaldehyde + glycine + H2O2. Its function is as follows. In the presence of tetrahydrofolate, catalyzes the oxidative demethylation of sarcosine to yield glycine, 5,10-methylenetetrahydrofolate and hydrogen peroxide. In the absence of tetrahydrofolate, catalyzes the oxidative demethylation of sarcosine to yield glycine, formaldehyde and hydrogen peroxide. The polypeptide is Sarcosine oxidase subunit gamma (Corynebacterium sp. (strain P-1)).